Reading from the N-terminus, the 446-residue chain is 3-phosphoshikimate 1-carboxyvinyltransferase (446 aa).

Residues K21, S22, and R26 each coordinate 3-phosphoshikimate. K21 provides a ligand contact to phosphoenolpyruvate. G92 and R120 together coordinate phosphoenolpyruvate. 4 residues coordinate 3-phosphoshikimate: S165, Q166, D308, and K335. Q166 is a phosphoenolpyruvate binding site. Residue D308 is the Proton acceptor of the active site. R339, R380, and K406 together coordinate phosphoenolpyruvate.

It belongs to the EPSP synthase family. In terms of assembly, monomer.

The protein localises to the cytoplasm. The catalysed reaction is 3-phosphoshikimate + phosphoenolpyruvate = 5-O-(1-carboxyvinyl)-3-phosphoshikimate + phosphate. The protein operates within metabolic intermediate biosynthesis; chorismate biosynthesis; chorismate from D-erythrose 4-phosphate and phosphoenolpyruvate: step 6/7. Functionally, catalyzes the transfer of the enolpyruvyl moiety of phosphoenolpyruvate (PEP) to the 5-hydroxyl of shikimate-3-phosphate (S3P) to produce enolpyruvyl shikimate-3-phosphate and inorganic phosphate. The polypeptide is 3-phosphoshikimate 1-carboxyvinyltransferase (Chlamydia caviae (strain ATCC VR-813 / DSM 19441 / 03DC25 / GPIC) (Chlamydophila caviae)).